A 326-amino-acid chain; its full sequence is Type II secretion system protein K (326 aa).

Positions 1 to 7 (MNHRQRG) are cleaved as a propeptide — leader sequence. Residues 8–28 (IALLMVLLILALMMVLASAMT) traverse the membrane as a helical segment. Over 29 to 326 (ERSARMYQQT…RYGIYWVADE (298 aa)) the chain is Periplasmic.

The protein belongs to the GSP K family. In terms of assembly, type II secretion is composed of four main components: the outer membrane complex, the inner membrane complex, the cytoplasmic secretion ATPase and the periplasm-spanning pseudopilus. Interacts with core component PulG. In terms of processing, cleaved by prepilin peptidase.

The protein localises to the cell inner membrane. Functionally, component of the type II secretion system required for the energy-dependent secretion of extracellular factors such as proteases and toxins from the periplasm. Plays a role in pseudopilus assembly and seems to control its length. Interacts with the pseudopilus tip complex that is critical for the recognition and binding of secretion substrates. The protein is Type II secretion system protein K (pulK) of Klebsiella pneumoniae.